A 216-amino-acid chain; its full sequence is Large ribosomal subunit protein uL3 (216 aa).

Residues Arg134 to Gln153 form a disordered region. Gln153 is subject to N5-methylglutamine.

This sequence belongs to the universal ribosomal protein uL3 family. As to quaternary structure, part of the 50S ribosomal subunit. Forms a cluster with proteins L14 and L19. Methylated by PrmB.

Functionally, one of the primary rRNA binding proteins, it binds directly near the 3'-end of the 23S rRNA, where it nucleates assembly of the 50S subunit. This Cupriavidus pinatubonensis (strain JMP 134 / LMG 1197) (Cupriavidus necator (strain JMP 134)) protein is Large ribosomal subunit protein uL3.